A 115-amino-acid chain; its full sequence is Large ribosomal subunit protein uL24 (115 aa).

Belongs to the universal ribosomal protein uL24 family. Part of the 50S ribosomal subunit.

In terms of biological role, one of two assembly initiator proteins, it binds directly to the 5'-end of the 23S rRNA, where it nucleates assembly of the 50S subunit. Its function is as follows. One of the proteins that surrounds the polypeptide exit tunnel on the outside of the subunit. The sequence is that of Large ribosomal subunit protein uL24 from Phytoplasma mali (strain AT).